The chain runs to 110 residues: Small ribosomal subunit protein bS16 (110 aa).

Positions Ala87–Gly110 are disordered.

The protein belongs to the bacterial ribosomal protein bS16 family.

This Bradyrhizobium sp. (strain BTAi1 / ATCC BAA-1182) protein is Small ribosomal subunit protein bS16.